Reading from the N-terminus, the 607-residue chain is Glutamine--fructose-6-phosphate aminotransferase [isomerizing] (607 aa).

Cysteine 2 acts as the Nucleophile; for GATase activity in catalysis. The Glutamine amidotransferase type-2 domain occupies 2–217 (CGIIGIIGND…DGDWAVLTRN (216 aa)). SIS domains are found at residues 283 to 422 (IGID…ARGA) and 455 to 597 (VCHD…VDQP). The For Fru-6P isomerization activity role is filled by lysine 602.

Homodimer.

The protein resides in the cytoplasm. It carries out the reaction D-fructose 6-phosphate + L-glutamine = D-glucosamine 6-phosphate + L-glutamate. Catalyzes the first step in hexosamine metabolism, converting fructose-6P into glucosamine-6P using glutamine as a nitrogen source. This Brucella abortus biovar 1 (strain 9-941) protein is Glutamine--fructose-6-phosphate aminotransferase [isomerizing].